A 714-amino-acid chain; its full sequence is Kinesin-like protein KIN-13 (714 aa).

The SAM domain occupies 1-63; the sequence is MSDLVYQWLE…FRLITTLKSR (63 aa). Over residues 69–81 the composition is skewed to polar residues; it reads QQPSAPNTGATPQ. 2 disordered regions span residues 69 to 109 and 122 to 161; these read QQPS…NDIQ and GGYE…NPRG. Positions 82 to 92 are enriched in low complexity; that stretch reads SVPSSHVSPHV. The span at 151–160 shows a compositional bias: pro residues; sequence PNAPNPPNPR. The 333-residue stretch at 183–515 folds into the Kinesin motor domain; the sequence is RIRVVIRKRP…LRYADRVKEL (333 aa). 273–280 serves as a coordination point for ATP; that stretch reads GQTGSGKS.

This sequence belongs to the TRAFAC class myosin-kinesin ATPase superfamily. Kinesin family. KIN-13 subfamily. In terms of assembly, interacts with PLK. In terms of processing, phosphorylated by PLK.

Its subcellular location is the cytoplasm. The protein resides in the cytoskeleton. It is found in the cell projection. The protein localises to the cilium. It localises to the flagellum. Its subcellular location is the flagellum basal body. The protein resides in the flagellum axoneme. It is found in the spindle. The protein localises to the chromosome. It localises to the centromere. Its subcellular location is the kinetochore. Involved in cell cycle. Involved in formation of flagella, regulation of flagellar length, and formation of median bodies during interphase. Regulates flagellar length in all eight distal flagellar tips by promoting disassembly of the microtubules. Disassembles microtubules at the distal flagellar tips in a length-dependent manner in order to maintain different equilibrium lengths of the four flagellar pairs. Regulates interphase and mitotic microtubule dynamics. Regulates microtubule disassembly dynamics of the dual mitotic spindles and the median body. The polypeptide is Kinesin-like protein KIN-13 (Giardia intestinalis (strain ATCC 50803 / WB clone C6) (Giardia lamblia)).